Consider the following 100-residue polypeptide: Large ribosomal subunit protein bL21 (100 aa).

It belongs to the bacterial ribosomal protein bL21 family. Part of the 50S ribosomal subunit. Contacts protein L20.

Functionally, this protein binds to 23S rRNA in the presence of protein L20. The sequence is that of Large ribosomal subunit protein bL21 from Ureaplasma parvum serovar 3 (strain ATCC 27815 / 27 / NCTC 11736).